The chain runs to 363 residues: GDP-fucose transporter (363 aa).

A run of 8 helical transmembrane segments spans residues 30–47 (VITA…LVFL), 62–79 (FITW…LFLS), 126–148 (VSFY…YLIL), 152–171 (TSGQ…LLGV), 180–202 (LSYT…AIYT), 222–244 (LNAL…VFYF), 251–273 (TFWI…TGWQ), and 307–326 (LLWW…YTYV). The disordered stretch occupies residues 334–363 (KNSGASPASEAKSDKVKLLGRDGNAAEESV). Positions 344 to 353 (AKSDKVKLLG) are enriched in basic and acidic residues.

It belongs to the TPT transporter family. SLC35C subfamily.

Its subcellular location is the golgi apparatus membrane. In terms of biological role, involved in GDP-fucose import from the cytoplasm into the Golgi lumen. This chain is GDP-fucose transporter, found in Caenorhabditis elegans.